A 157-amino-acid chain; its full sequence is MSQVILDLQLACENHAGLPDEAQFQRWLDGVIPQFQEEAEVTIRLVDEAESHDLNLTYRGKDKPTNVLSFPFEAPAGIEMPLLGDLIICRQVVEQEAQEQSKPLEAHWAHMVVHGSLHLLGYDHIDDDEAEEMESLETEIMLAMGYEDPYIAEKIAE.

The Zn(2+) site is built by H114, H118, and H124.

The protein belongs to the endoribonuclease YbeY family. The cofactor is Zn(2+).

The protein localises to the cytoplasm. In terms of biological role, single strand-specific metallo-endoribonuclease involved in late-stage 70S ribosome quality control and in maturation of the 3' terminus of the 16S rRNA. The sequence is that of Endoribonuclease YbeY from Salmonella typhimurium (strain LT2 / SGSC1412 / ATCC 700720).